Here is a 420-residue protein sequence, read N- to C-terminus: Mannose-1-phosphate guanylyltransferase regulatory subunit alpha (420 aa).

The tract at residues 2–251 (LKAVILIGGP…DGIWSQIKSA (250 aa)) is substrate-binding domain. GDP-alpha-D-mannose is bound by residues Glu85 and Gln247. Residues 273–420 (LARHTAGGPR…SRSFTNQIIL (148 aa)) form a hexapeptide repeat domain region. Residues 356-384 (TPNDPNPNDPRARMDSESLFKDGKLLPAI) form a C-loop region.

It belongs to the transferase hexapeptide repeat family. As to quaternary structure, component of the GMPPA-GMPPB mannose-1-phosphate guanylyltransferase complex composed of 4 GMPPA subunits and 8 GMPPB subunits; the complex is organized into three layers, a central layer made up of 2 GMPPA dimers sandwiched between two layers each made up of 2 GMPPB dimers.

The protein localises to the cytoplasm. Regulatory subunit of the GMPPA-GMPPB mannose-1-phosphate guanylyltransferase complex; reduces the catalytic activity of GMPPB when part of the complex. Mediates allosteric feedback inhibition of GMPPB catalytic activity upon binding GDP-alpha-D-mannose. Together with GMPPB regulates GDP-alpha-D-mannose levels. The polypeptide is Mannose-1-phosphate guanylyltransferase regulatory subunit alpha (Gmppa) (Rattus norvegicus (Rat)).